Consider the following 322-residue polypeptide: Large ribosomal subunit protein uL15m (322 aa).

Residues 1 to 57 constitute a mitochondrion transit peptide; it reads MKAERQTGLRNSFTTVIGRKLINTFVPSMMLTSVAGNDIFFRGLFKSPVLAFQSYRY. The tract at residues 69 to 99 is disordered; it reads GSTKSFKRLGRGPSSGLGKTSGRGQKGQKAR. Residues 81–93 are compositionally biased toward gly residues; the sequence is PSSGLGKTSGRGQ.

This sequence belongs to the universal ribosomal protein uL15 family. As to quaternary structure, component of the mitochondrial large ribosomal subunit (mt-LSU). Mature yeast 74S mitochondrial ribosomes consist of a small (37S) and a large (54S) subunit. The 37S small subunit contains a 15S ribosomal RNA (15S mt-rRNA) and 34 different proteins. The 54S large subunit contains a 21S rRNA (21S mt-rRNA) and 46 different proteins.

The protein localises to the mitochondrion. Component of the mitochondrial ribosome (mitoribosome), a dedicated translation machinery responsible for the synthesis of mitochondrial genome-encoded proteins, including at least some of the essential transmembrane subunits of the mitochondrial respiratory chain. The mitoribosomes are attached to the mitochondrial inner membrane and translation products are cotranslationally integrated into the membrane. This is Large ribosomal subunit protein uL15m (MRPL10) from Saccharomyces cerevisiae (strain ATCC 204508 / S288c) (Baker's yeast).